The chain runs to 201 residues: Recombination protein RecR (201 aa).

The C4-type zinc finger occupies 57–72 (CTHCRTFTEEESCAIC). One can recognise a Toprim domain in the interval 81 to 176 (GFLCVVEQPS…KVSRIAHGIP (96 aa)).

Belongs to the RecR family.

Functionally, may play a role in DNA repair. It seems to be involved in an RecBC-independent recombinational process of DNA repair. It may act with RecF and RecO. This is Recombination protein RecR from Histophilus somni (strain 129Pt) (Haemophilus somnus).